We begin with the raw amino-acid sequence, 339 residues long: Ketol-acid reductoisomerase (NADP(+)) (339 aa).

Positions 1–182 (MRVYYDRDAD…GGGRSGIIET (182 aa)) constitute a KARI N-terminal Rossmann domain. NADP(+) is bound by residues 24-27 (YGSQ), K48, S51, T53, and 83-86 (DELQ). H108 is a catalytic residue. Residue G134 coordinates NADP(+). Residues 183-328 (NFKEECETDL…AKLRAMMPWI (146 aa)) form the KARI C-terminal knotted domain. D191, E195, E227, and E231 together coordinate Mg(2+). S252 provides a ligand contact to substrate.

It belongs to the ketol-acid reductoisomerase family. Requires Mg(2+) as cofactor.

It carries out the reaction (2R)-2,3-dihydroxy-3-methylbutanoate + NADP(+) = (2S)-2-acetolactate + NADPH + H(+). The enzyme catalyses (2R,3R)-2,3-dihydroxy-3-methylpentanoate + NADP(+) = (S)-2-ethyl-2-hydroxy-3-oxobutanoate + NADPH + H(+). It participates in amino-acid biosynthesis; L-isoleucine biosynthesis; L-isoleucine from 2-oxobutanoate: step 2/4. The protein operates within amino-acid biosynthesis; L-valine biosynthesis; L-valine from pyruvate: step 2/4. Functionally, involved in the biosynthesis of branched-chain amino acids (BCAA). Catalyzes an alkyl-migration followed by a ketol-acid reduction of (S)-2-acetolactate (S2AL) to yield (R)-2,3-dihydroxy-isovalerate. In the isomerase reaction, S2AL is rearranged via a Mg-dependent methyl migration to produce 3-hydroxy-3-methyl-2-ketobutyrate (HMKB). In the reductase reaction, this 2-ketoacid undergoes a metal-dependent reduction by NADPH to yield (R)-2,3-dihydroxy-isovalerate. In Rhizobium meliloti (strain 1021) (Ensifer meliloti), this protein is Ketol-acid reductoisomerase (NADP(+)).